The following is a 635-amino-acid chain: Threonine--tRNA ligase (635 aa).

A TGS domain is found at 1-61; sequence MIQITLPDAS…EKDSALSIIT (61 aa). Residues 242–533 form a catalytic region; that stretch reads DHRKLGKELD…LIEEHAGALP (292 aa). Positions 333, 384, and 510 each coordinate Zn(2+).

This sequence belongs to the class-II aminoacyl-tRNA synthetase family. As to quaternary structure, homodimer. Requires Zn(2+) as cofactor.

The protein localises to the cytoplasm. The enzyme catalyses tRNA(Thr) + L-threonine + ATP = L-threonyl-tRNA(Thr) + AMP + diphosphate + H(+). Its function is as follows. Catalyzes the attachment of threonine to tRNA(Thr) in a two-step reaction: L-threonine is first activated by ATP to form Thr-AMP and then transferred to the acceptor end of tRNA(Thr). Also edits incorrectly charged L-seryl-tRNA(Thr). This chain is Threonine--tRNA ligase, found in Polaromonas sp. (strain JS666 / ATCC BAA-500).